The following is a 375-amino-acid chain: All-trans-retinol dehydrogenase [NAD(+)] ADH1B (375 aa).

Serine 2 is subject to N-acetylserine. At serine 23 the chain carries Phosphoserine. Tyrosine 35 carries the post-translational modification Phosphotyrosine. Zn(2+)-binding residues include cysteine 47, histidine 68, cysteine 98, cysteine 101, cysteine 104, cysteine 112, and cysteine 175. NAD(+)-binding positions include 200 to 205, aspartate 224, lysine 229, 293 to 295, and arginine 370; these read GLGGVG and VGV.

This sequence belongs to the zinc-containing alcohol dehydrogenase family. Dimer of identical or non-identical chains of three types; alpha, beta and gamma. The cofactor is Zn(2+).

It localises to the cytoplasm. It carries out the reaction all-trans-retinol + NAD(+) = all-trans-retinal + NADH + H(+). The catalysed reaction is all-trans-4-hydroxyretinol + NAD(+) = all-trans-4-hydroxyretinal + NADH + H(+). The enzyme catalyses all-trans-4-oxoretinol + NAD(+) = all-trans-4-oxoretinal + NADH + H(+). Catalyzes the NAD-dependent oxidation of all-trans-retinol and its derivatives such as all-trans-4-hydroxyretinol and may participate in retinoid metabolism. In vitro can also catalyze the NADH-dependent reduction of all-trans-retinal and its derivatives such as all-trans-4-oxoretinal. Catalyzes in the oxidative direction with higher efficiency. Has the same affinity for all-trans-4-hydroxyretinol and all-trans-4-oxoretinal. The protein is All-trans-retinol dehydrogenase [NAD(+)] ADH1B of Homo sapiens (Human).